The following is a 102-amino-acid chain: PqqA binding protein (102 aa).

It belongs to the PqqD family. As to quaternary structure, monomer. Interacts with PqqE.

It functions in the pathway cofactor biosynthesis; pyrroloquinoline quinone biosynthesis. In terms of biological role, functions as a PqqA binding protein and presents PqqA to PqqE, in the pyrroloquinoline quinone (PQQ) biosynthetic pathway. The chain is PqqA binding protein from Rhodopseudomonas palustris (strain HaA2).